The following is a 95-amino-acid chain: UPF0235 protein Adeh_1087 (95 aa).

This sequence belongs to the UPF0235 family.

The protein is UPF0235 protein Adeh_1087 of Anaeromyxobacter dehalogenans (strain 2CP-C).